Consider the following 102-residue polypeptide: Large ribosomal subunit protein eL21 (102 aa).

The span at 1–21 shows a compositional bias: basic residues; that stretch reads MVRRSKGFRSRTRKKLRKKPR. A disordered region spans residues 1–33; the sequence is MVRRSKGFRSRTRKKLRKKPRERGLSPLGPMTQ.

It belongs to the eukaryotic ribosomal protein eL21 family.

In Methanopyrus kandleri (strain AV19 / DSM 6324 / JCM 9639 / NBRC 100938), this protein is Large ribosomal subunit protein eL21.